Consider the following 552-residue polypeptide: MRSDAMKTGLARAPHRSLLKAMGLTETEIERPIIGVVNAHNELIPGHIHLNNLVEAVKAGVRLAGGTPLEFPTIGVCDGLAMNHVGMKYSLASRELIADMIEVMAMAHPFDALVFIPNCDKIVPGMLMAAARLNLPAIFISGGPMLAGRYQGRDVSLSTMFEAVGAVQAGKMTEQELAALEDCACPGCGSCAGMFTANTMNCMVEALGMGLPGNGTTPAVSGSRVRLAKEAGMQVMKLLQENIRPLDIMTATAFRNAVAVDMALGGSTNTCLHLPAIAHEAGVKLDLNTFNEINRRTPQICKLSPAGSQHIQDLDEAGGIPAVMNELYRHGLIDGSALTVTGRTVADNVSGRVVSRREVIRPVEDPYSREGGLAVLYGNLAPEGAVVKKGAVLPEMMRHEGPARVFNSEEEAFAAIMGKQIKPGDVVVIRYEGPRGGPGMQEMLSPTAALAGMGLDSSVALITDGRFSGASRGASIGHVSPEAAAGGLIALVEEGDIIAIDIEAGKLELKVPEEEIARRRQNWQAPPPKITGGYLGRYARMVTSGARGAVLE.

A Mg(2+)-binding site is contributed by Asp78. Residue Cys119 coordinates [2Fe-2S] cluster. 2 residues coordinate Mg(2+): Asp120 and Lys121. An N6-carboxylysine modification is found at Lys121. A [2Fe-2S] cluster-binding site is contributed by Cys191. A Mg(2+)-binding site is contributed by Glu442. Ser468 (proton acceptor) is an active-site residue.

Belongs to the IlvD/Edd family. Homodimer. [2Fe-2S] cluster serves as cofactor. The cofactor is Mg(2+).

It catalyses the reaction (2R)-2,3-dihydroxy-3-methylbutanoate = 3-methyl-2-oxobutanoate + H2O. The enzyme catalyses (2R,3R)-2,3-dihydroxy-3-methylpentanoate = (S)-3-methyl-2-oxopentanoate + H2O. It functions in the pathway amino-acid biosynthesis; L-isoleucine biosynthesis; L-isoleucine from 2-oxobutanoate: step 3/4. Its pathway is amino-acid biosynthesis; L-valine biosynthesis; L-valine from pyruvate: step 3/4. In terms of biological role, functions in the biosynthesis of branched-chain amino acids. Catalyzes the dehydration of (2R,3R)-2,3-dihydroxy-3-methylpentanoate (2,3-dihydroxy-3-methylvalerate) into 2-oxo-3-methylpentanoate (2-oxo-3-methylvalerate) and of (2R)-2,3-dihydroxy-3-methylbutanoate (2,3-dihydroxyisovalerate) into 2-oxo-3-methylbutanoate (2-oxoisovalerate), the penultimate precursor to L-isoleucine and L-valine, respectively. This is Dihydroxy-acid dehydratase from Moorella thermoacetica (strain ATCC 39073 / JCM 9320).